Consider the following 355-residue polypeptide: Probable butyrate kinase (355 aa).

Belongs to the acetokinase family.

Its subcellular location is the cytoplasm. It carries out the reaction butanoate + ATP = butanoyl phosphate + ADP. In Listeria innocua serovar 6a (strain ATCC BAA-680 / CLIP 11262), this protein is Probable butyrate kinase.